A 137-amino-acid polypeptide reads, in one-letter code: ATP synthase epsilon chain (137 aa).

Belongs to the ATPase epsilon chain family. In terms of assembly, F-type ATPases have 2 components, CF(1) - the catalytic core - and CF(0) - the membrane proton channel. CF(1) has five subunits: alpha(3), beta(3), gamma(1), delta(1), epsilon(1). CF(0) has three main subunits: a, b and c.

The protein resides in the cellular thylakoid membrane. Produces ATP from ADP in the presence of a proton gradient across the membrane. The polypeptide is ATP synthase epsilon chain (Trichormus variabilis (strain ATCC 29413 / PCC 7937) (Anabaena variabilis)).